Reading from the N-terminus, the 319-residue chain is Zinc metalloproteinase/disintegrin (319 aa).

A propeptide spanning residues 1–28 is cleaved from the precursor; it reads EDEAPKMCGVTQNWESYEPIKKASQSNL. Positions 34–230 constitute a Peptidase M12B domain; it reads RYIELVIVAD…QKPQCILNKP (197 aa). Residues Glu-37 and Asp-121 each coordinate Ca(2+). Disulfide bonds link Cys-145/Cys-225, Cys-185/Cys-209, and Cys-187/Cys-192. His-170 contributes to the Zn(2+) binding site. Glu-171 is an active-site residue. Positions 174 and 180 each coordinate Zn(2+). The Ca(2+) site is built by Cys-225 and Asn-228. Positions 231–246 are excised as a propeptide; it reads LRTDTVSTPVSGNELL. Residues 238 to 319 form the Disintegrin domain; sequence TPVSGNELLE…AGCPRNPFHA (82 aa). Cystine bridges form between Cys-252–Cys-267, Cys-254–Cys-262, Cys-261–Cys-284, Cys-275–Cys-281, Cys-280–Cys-305, and Cys-293–Cys-312. Residues 297–299 carry the Cell attachment site motif; sequence RGD.

Belongs to the venom metalloproteinase (M12B) family. P-II subfamily. P-IIa sub-subfamily. In terms of assembly, monomer. Zn(2+) serves as cofactor. In terms of tissue distribution, expressed by the venom gland.

The protein localises to the secreted. With respect to regulation, excess of calcium ions significantly suppress the autoproteolysis of the enzyme. Functionally, metalloproteinase that impairs hemostasis in the envenomed animal. Shows autoproteolysis dependent on pH and temperature. Does not show hemorrhagic activity. Its function is as follows. Inhibits platelet aggregation induced by ADP (IC(50) is 200 nM), collagen (IC(50) is 500 nM), thrombin and epinephrin (IC(50) is 300 nM). Does not inhibit aggregation induced by ristocetin. In terms of biological role, inhibits platelet aggregation induced by ADP (IC(50) is 100 nM), collagen (IC(50) is 500 nM), thrombin and epinephrin (IC(50) is 300 nM). Does not inhibit aggregation induced by ristocetin. Significantly inhibits angiogenesis both in vivo and in vitro. In Gloydius brevicauda (Korean slamosa snake), this protein is Zinc metalloproteinase/disintegrin.